A 408-amino-acid polypeptide reads, in one-letter code: ATP phosphoribosyltransferase regulatory subunit (408 aa).

This sequence belongs to the class-II aminoacyl-tRNA synthetase family. HisZ subfamily. Heteromultimer composed of HisG and HisZ subunits.

The protein localises to the cytoplasm. It functions in the pathway amino-acid biosynthesis; L-histidine biosynthesis; L-histidine from 5-phospho-alpha-D-ribose 1-diphosphate: step 1/9. Required for the first step of histidine biosynthesis. May allow the feedback regulation of ATP phosphoribosyltransferase activity by histidine. The chain is ATP phosphoribosyltransferase regulatory subunit from Gloeothece citriformis (strain PCC 7424) (Cyanothece sp. (strain PCC 7424)).